The primary structure comprises 140 residues: Probable NADH dehydrogenase [ubiquinone] iron-sulfur protein 6, mitochondrial (140 aa).

Belongs to the complex I NDUFS6 subunit family. Complex I is composed of 45 different subunits. This is a component of the iron-sulfur (IP) fragment of the enzyme.

The protein localises to the mitochondrion inner membrane. Functionally, accessory subunit of the mitochondrial membrane respiratory chain NADH dehydrogenase (Complex I), that is believed not to be involved in catalysis. Complex I functions in the transfer of electrons from NADH to the respiratory chain. The immediate electron acceptor for the enzyme is believed to be ubiquinone. The protein is Probable NADH dehydrogenase [ubiquinone] iron-sulfur protein 6, mitochondrial (nduf-6) of Caenorhabditis elegans.